Here is a 224-residue protein sequence, read N- to C-terminus: V-type proton ATPase subunit S1-like protein (224 aa).

A helical transmembrane segment spans residues 147–167 (PAFLIGLAMSLILLLVLAYAL).

It belongs to the vacuolar ATPase subunit S1 family.

Its subcellular location is the membrane. The sequence is that of V-type proton ATPase subunit S1-like protein (ATP6AP1L) from Homo sapiens (Human).